Reading from the N-terminus, the 100-residue chain is UPF0473 protein LMHCC_1068 (100 aa).

Belongs to the UPF0473 family.

The protein is UPF0473 protein LMHCC_1068 of Listeria monocytogenes serotype 4a (strain HCC23).